Consider the following 390-residue polypeptide: Magnesium-protoporphyrin IX monomethyl ester [oxidative] cyclase (390 aa).

The protein belongs to the AcsF family. Fe cation is required as a cofactor.

The enzyme catalyses Mg-protoporphyrin IX 13-monomethyl ester + 3 NADPH + 3 O2 + 2 H(+) = 3,8-divinyl protochlorophyllide a + 3 NADP(+) + 5 H2O. It functions in the pathway porphyrin-containing compound metabolism; chlorophyll biosynthesis (light-independent). Functionally, catalyzes the formation of the isocyclic ring in chlorophyll biosynthesis. Mediates the cyclase reaction, which results in the formation of divinylprotochlorophyllide (Pchlide) characteristic of all chlorophylls from magnesium-protoporphyrin IX 13-monomethyl ester (MgPMME). The sequence is that of Magnesium-protoporphyrin IX monomethyl ester [oxidative] cyclase from Prochlorococcus marinus (strain AS9601).